The primary structure comprises 484 residues: Ribosomal RNA small subunit methyltransferase F (484 aa).

Residues 126–132 (AAAPGSK), Glu-150, Asp-177, and Asp-195 contribute to the S-adenosyl-L-methionine site. Residue Cys-248 is the Nucleophile of the active site.

It belongs to the class I-like SAM-binding methyltransferase superfamily. RsmB/NOP family.

Its subcellular location is the cytoplasm. It catalyses the reaction cytidine(1407) in 16S rRNA + S-adenosyl-L-methionine = 5-methylcytidine(1407) in 16S rRNA + S-adenosyl-L-homocysteine + H(+). Its function is as follows. Specifically methylates the cytosine at position 1407 (m5C1407) of 16S rRNA. The chain is Ribosomal RNA small subunit methyltransferase F from Pectobacterium carotovorum subsp. carotovorum (strain PC1).